A 393-amino-acid polypeptide reads, in one-letter code: MSIKTVKDFSSFAGKRALVRCDFNVPLKEGSISDDTRIRAALSTIEYLKERGARIVLVSHLGRPDGKKNPKYSLKPVANRLSELLGQDVKMLSDCIGSEVVNSTLQMKDGDVVLLENVRFYAEEEKNDKNFAKKLSENGDVFVNDAFGAAHRAHASTVGVADYLPSVGGFLMEKEDKFLGGILKNPERPFVSIIGGSKVSSKIAVLESLLSKSNVVVIGGGMAYTFLHSEGYSIGKSLLEDEYIGIASSFLKKAKELGVKVILPLDHIVADDFNKNSIPEYIDSFNIPENKIGMDIGANTLKEIENVVKTAKTIIWNGPLGVFEFDSFSKGTAKVAEMVASCSGLTVVGGGDSVAAVNKFNLSDKITHVSTGGGASLEYLEGRILPGIKVLEN.

Substrate-binding positions include D22–N24, R37, H60–R63, R119, and R152. Residues K202, G293, E324, and G350–S353 each bind ATP.

This sequence belongs to the phosphoglycerate kinase family. In terms of assembly, monomer.

The protein resides in the cytoplasm. The catalysed reaction is (2R)-3-phosphoglycerate + ATP = (2R)-3-phospho-glyceroyl phosphate + ADP. Its pathway is carbohydrate degradation; glycolysis; pyruvate from D-glyceraldehyde 3-phosphate: step 2/5. This Borreliella burgdorferi (strain ATCC 35210 / DSM 4680 / CIP 102532 / B31) (Borrelia burgdorferi) protein is Phosphoglycerate kinase (pgk).